Here is a 392-residue protein sequence, read N- to C-terminus: Bone morphogenetic protein 15 (392 aa).

Residues 1 to 25 (MALLTILRILLWGVVLFMEQRVQMA) form the signal peptide. A propeptide spanning residues 26-267 (KPGWPSTALL…ESSFLMRSVR (242 aa)) is cleaved from the precursor. N85, N213, N236, N349, and N373 each carry an N-linked (GlcNAc...) asparagine glycan. Intrachain disulfides connect C291-C357, C320-C389, and C324-C391.

Belongs to the TGF-beta family. In terms of assembly, homodimer. But, in contrast to other members of this family, cannot be disulfide-linked. Ovary specific.

Its subcellular location is the secreted. May be involved in follicular development. Oocyte-specific growth/differentiation factor that stimulates folliculogenesis and granulosa cell (GC) growth. This chain is Bone morphogenetic protein 15 (Bmp15), found in Mus musculus (Mouse).